Consider the following 330-residue polypeptide: Ketol-acid reductoisomerase (NADP(+)) (330 aa).

In terms of domain architecture, KARI N-terminal Rossmann spans 1–181 (MKVYYEQDAT…GGARSGVIET (181 aa)). Residues 24-27 (YGSQ), R47, and 82-85 (DQVQ) each bind NADP(+). H107 is a catalytic residue. Residue G133 coordinates NADP(+). The KARI C-terminal knotted domain maps to 182–327 (TFKEETETDL…GKLRGMMPWL (146 aa)). Mg(2+)-binding residues include D190, E194, E226, and E230. S251 lines the substrate pocket.

Belongs to the ketol-acid reductoisomerase family. The cofactor is Mg(2+).

The enzyme catalyses (2R)-2,3-dihydroxy-3-methylbutanoate + NADP(+) = (2S)-2-acetolactate + NADPH + H(+). It carries out the reaction (2R,3R)-2,3-dihydroxy-3-methylpentanoate + NADP(+) = (S)-2-ethyl-2-hydroxy-3-oxobutanoate + NADPH + H(+). It functions in the pathway amino-acid biosynthesis; L-isoleucine biosynthesis; L-isoleucine from 2-oxobutanoate: step 2/4. Its pathway is amino-acid biosynthesis; L-valine biosynthesis; L-valine from pyruvate: step 2/4. Functionally, involved in the biosynthesis of branched-chain amino acids (BCAA). Catalyzes an alkyl-migration followed by a ketol-acid reduction of (S)-2-acetolactate (S2AL) to yield (R)-2,3-dihydroxy-isovalerate. In the isomerase reaction, S2AL is rearranged via a Mg-dependent methyl migration to produce 3-hydroxy-3-methyl-2-ketobutyrate (HMKB). In the reductase reaction, this 2-ketoacid undergoes a metal-dependent reduction by NADPH to yield (R)-2,3-dihydroxy-isovalerate. This Nitratidesulfovibrio vulgaris (strain DSM 19637 / Miyazaki F) (Desulfovibrio vulgaris) protein is Ketol-acid reductoisomerase (NADP(+)).